The chain runs to 349 residues: Protein-arginine kinase (349 aa).

Positions 24–252 (IVLSSRIRLA…SQIIEQERQA (229 aa)) constitute a Phosphagen kinase C-terminal domain. Residues 27-31 (SSRIR), His-89, Arg-123, 174-178 (RASVM), and 205-210 (RGIYGE) each bind ATP. Residues 335-340 (RDIKRA) carry the RDXXRA motif of the pArg binding pocket involved in allosteric regulation motif.

Belongs to the ATP:guanido phosphotransferase family.

The catalysed reaction is L-arginyl-[protein] + ATP = N(omega)-phospho-L-arginyl-[protein] + ADP + H(+). Appears to be allosterically activated by the binding of pArg-containing polypeptides to the pArg-binding pocket localized in the C-terminal domain of McsB. Its function is as follows. Catalyzes the specific phosphorylation of arginine residues in proteins. The protein is Protein-arginine kinase of Halothermothrix orenii (strain H 168 / OCM 544 / DSM 9562).